A 177-amino-acid chain; its full sequence is MSIEVANESGIDVSEAELVSVARFVIAKMDVNPCAELSMLLLDTAAMADLHMRWMDLPGPTDVMSFPMDELEPGGRPDAPEPGPSMLGDIVLCPEFAAEQAAAAGHSLGHELALLTIHGVLHLLGYDHAEPDEEKEMFALQDRLLEEWVADQVEAYQHDRQDEKDRRLLDKSRYFDL.

Zn(2+) is bound by residues His-118, His-122, and His-128.

Belongs to the endoribonuclease YbeY family. Requires Zn(2+) as cofactor.

It localises to the cytoplasm. Functionally, single strand-specific metallo-endoribonuclease involved in late-stage 70S ribosome quality control and in maturation of the 3' terminus of the 16S rRNA. In Mycobacterium bovis (strain ATCC BAA-935 / AF2122/97), this protein is Endoribonuclease YbeY.